Here is a 241-residue protein sequence, read N- to C-terminus: 1-(5-phosphoribosyl)-5-[(5-phosphoribosylamino)methylideneamino] imidazole-4-carboxamide isomerase (241 aa).

The Proton acceptor role is filled by D10. Residue D129 is the Proton donor of the active site.

This sequence belongs to the HisA/HisF family.

The protein localises to the cytoplasm. It carries out the reaction 1-(5-phospho-beta-D-ribosyl)-5-[(5-phospho-beta-D-ribosylamino)methylideneamino]imidazole-4-carboxamide = 5-[(5-phospho-1-deoxy-D-ribulos-1-ylimino)methylamino]-1-(5-phospho-beta-D-ribosyl)imidazole-4-carboxamide. The protein operates within amino-acid biosynthesis; L-histidine biosynthesis; L-histidine from 5-phospho-alpha-D-ribose 1-diphosphate: step 4/9. This chain is 1-(5-phosphoribosyl)-5-[(5-phosphoribosylamino)methylideneamino] imidazole-4-carboxamide isomerase, found in Salinispora arenicola (strain CNS-205).